A 213-amino-acid chain; its full sequence is Probable GTP-binding protein EngB (213 aa).

The EngB-type G domain maps to 25–203; it reads EGTEVAFAGR…EDVLNGWLLP (179 aa). Residues 33-40, 60-64, 80-83, 147-150, and 179-184 each bind GTP; these read GRSNAGKS, GRTQL, DLPG, TKAD, and AQMFSA. Mg(2+) is bound by residues serine 40 and threonine 62.

Belongs to the TRAFAC class TrmE-Era-EngA-EngB-Septin-like GTPase superfamily. EngB GTPase family. The cofactor is Mg(2+).

Necessary for normal cell division and for the maintenance of normal septation. This chain is Probable GTP-binding protein EngB, found in Saccharophagus degradans (strain 2-40 / ATCC 43961 / DSM 17024).